The chain runs to 549 residues: Glucose-6-phosphate isomerase (549 aa).

E355 acts as the Proton donor in catalysis. Catalysis depends on residues H386 and K514.

It belongs to the GPI family.

It is found in the cytoplasm. The enzyme catalyses alpha-D-glucose 6-phosphate = beta-D-fructose 6-phosphate. Its pathway is carbohydrate biosynthesis; gluconeogenesis. It functions in the pathway carbohydrate degradation; glycolysis; D-glyceraldehyde 3-phosphate and glycerone phosphate from D-glucose: step 2/4. In terms of biological role, catalyzes the reversible isomerization of glucose-6-phosphate to fructose-6-phosphate. This chain is Glucose-6-phosphate isomerase, found in Desulfatibacillum aliphaticivorans.